The sequence spans 198 residues: Large ribosomal subunit protein bL25 (198 aa).

It belongs to the bacterial ribosomal protein bL25 family. CTC subfamily. As to quaternary structure, part of the 50S ribosomal subunit; part of the 5S rRNA/L5/L18/L25 subcomplex. Contacts the 5S rRNA. Binds to the 5S rRNA independently of L5 and L18.

In terms of biological role, this is one of the proteins that binds to the 5S RNA in the ribosome where it forms part of the central protuberance. The protein is Large ribosomal subunit protein bL25 of Nitrosomonas europaea (strain ATCC 19718 / CIP 103999 / KCTC 2705 / NBRC 14298).